The chain runs to 628 residues: Biosynthetic arginine decarboxylase (628 aa).

Lys-99 carries the N6-(pyridoxal phosphate)lysine modification. 279-289 (VDVGGGLGIDY) is a binding site for substrate.

The protein belongs to the Orn/Lys/Arg decarboxylase class-II family. SpeA subfamily. It depends on Mg(2+) as a cofactor. The cofactor is pyridoxal 5'-phosphate.

It carries out the reaction L-arginine + H(+) = agmatine + CO2. The protein operates within amine and polyamine biosynthesis; agmatine biosynthesis; agmatine from L-arginine: step 1/1. In terms of biological role, catalyzes the biosynthesis of agmatine from arginine. In Xylella fastidiosa (strain M12), this protein is Biosynthetic arginine decarboxylase.